The following is a 138-amino-acid chain: Gonadotropin subunit beta-2 (138 aa).

Positions Met1–Ser21 are cleaved as a signal peptide. 6 cysteine pairs are disulfide-bonded: Cys27–Cys75, Cys41–Cys90, Cys44–Cys128, Cys52–Cys106, Cys56–Cys108, and Cys111–Cys118. A glycan (N-linked (GlcNAc...) asparagine) is linked at Asn31.

It belongs to the glycoprotein hormones subunit beta family. In terms of assembly, heterodimer of an alpha and a beta chain.

The protein resides in the secreted. Its function is as follows. Involved in gametogenesis and steroidogenesis. This is Gonadotropin subunit beta-2 (cgbb) from Clarias gariepinus (North African catfish).